The sequence spans 447 residues: Probable alpha-galactosidase B (447 aa).

Residues 1–22 (MTTFLSLTTAAAVLTLARGSNA) form the signal peptide. 2 disulfides stabilise this stretch: Cys45/Cys77 and Cys127/Cys157. Asp155 functions as the Nucleophile in the catalytic mechanism. 2 N-linked (GlcNAc...) asparagine glycosylation sites follow: Asn162 and Asn180. 225–229 (NWGQA) is a substrate binding site. An N-linked (GlcNAc...) asparagine glycan is attached at Asn236. The active-site Proton donor is Asp247. An N-linked (GlcNAc...) asparagine glycan is attached at Asn286.

Belongs to the glycosyl hydrolase 27 family.

Its subcellular location is the secreted. It carries out the reaction Hydrolysis of terminal, non-reducing alpha-D-galactose residues in alpha-D-galactosides, including galactose oligosaccharides, galactomannans and galactolipids.. Functionally, hydrolyzes a variety of simple alpha-D-galactoside as well as more complex molecules such as oligosaccharides and polysaccharides. This chain is Probable alpha-galactosidase B (aglB), found in Neosartorya fischeri (strain ATCC 1020 / DSM 3700 / CBS 544.65 / FGSC A1164 / JCM 1740 / NRRL 181 / WB 181) (Aspergillus fischerianus).